Here is a 288-residue protein sequence, read N- to C-terminus: Syntaxin-1A (288 aa).

The Cytoplasmic segment spans residues 1–265 (MKDRTQELRT…KYQSKARRKK (265 aa)). 3 positions are modified to phosphoserine: serine 14, serine 64, and serine 95. Residues 68–109 (DEKTKEELEELMSDIKKTANKVRSKLKSIEQSIEQEEGLNRS) are a coiled coil. Serine 188 carries the post-translational modification Phosphoserine; by DAPK1. Residues 192–254 (LSEIETRHSE…ERAVSDTKKA (63 aa)) enclose the t-SNARE coiled-coil homology domain. Glycyl lysine isopeptide (Lys-Gly) (interchain with G-Cter in SUMO) cross-links involve residues lysine 252, lysine 253, and lysine 256. A helical; Anchor for type IV membrane protein membrane pass occupies residues 266-286 (IMIIICCVILGIVIASTVGGI). The Extracellular portion of the chain corresponds to 287 to 288 (FA).

Belongs to the syntaxin family. Part of the SNARE core complex containing SNAP25, VAMP2 and STX1A; this complex constitutes the basic catalytic machinery of the complex neurotransmitter release apparatus. The SNARE complex interacts with CPLX1. Interacts with STXBP1. The interaction with STXBP1 promotes assembly of the SNARE complex. Interacts (via C-terminus) with KCNB1 (via C-terminus); the interaction increases in a calcium-dependent manner and induces a pore-independent enhancement of exocytosis in neuroendocrine cells, chromaffin cells, pancreatic beta cells and from the soma of dorsal root ganglia (DRG) neurons. Interacts with SYTL4. Interacts with STXBP6. Interacts with PLCL1 (via C2 domain). Interacts with OTOF. Interacts with LGI3. Interacts (via the H3 domain) with SLC6A4 (via the N-terminus); this interaction regulates SLC4A6 channel conductance in thalamocortical neurons. Interacts with SYT6 and SYT8; the interaction is Ca(2+)-dependent. Interacts with VAMP8. Interacts with SNAP23. Interacts with VAPA and SYBU. Interacts with PRRT2. Interacts with SEPT8. Interacts with STXBP5L. Interacts with synaptotagmin-1/SYT1. Interacts with SEPTIN5; in the cerebellar cortex. Interacts with SEPTIN4; in the striatum. Phosphorylated by CK2. Phosphorylation at Ser-188 by DAPK1 significantly decreases its interaction with STXBP1. In terms of processing, sumoylated, sumoylation is required for regulation of synaptic vesicle endocytosis. In terms of tissue distribution, highly expressed in embryonic spinal cord and ganglia and in adult cerebellum and cerebral cortex. Expressed in heart, liver, fat, skeletal muscle, kidney and brain.

It localises to the cytoplasmic vesicle. The protein localises to the secretory vesicle. The protein resides in the synaptic vesicle membrane. It is found in the synapse. Its subcellular location is the synaptosome. It localises to the cell membrane. The protein localises to the secreted. Its function is as follows. Plays an essential role in hormone and neurotransmitter calcium-dependent exocytosis and endocytosis. Part of the SNARE (Soluble NSF Attachment Receptor) complex composed of SNAP25, STX1A and VAMP2 which mediates the fusion of synaptic vesicles with the presynaptic plasma membrane. STX1A and SNAP25 are localized on the plasma membrane while VAMP2 resides in synaptic vesicles. The pairing of the three SNAREs from the N-terminal SNARE motifs to the C-terminal anchors leads to the formation of the SNARE complex, which brings membranes into close proximity and results in final fusion. Participates in the calcium-dependent regulation of acrosomal exocytosis in sperm. Also plays an important role in the exocytosis of hormones such as insulin or glucagon-like peptide 1 (GLP-1). This Homo sapiens (Human) protein is Syntaxin-1A (STX1A).